The sequence spans 179 residues: MSAEKSMNVSREFSVQQIHSFTLSEKTARYLAIKRVMDIWFALIGLAIALPMIAVFSILICLETPGPAIYTQERVGKGGKPFKLYKLRSMKIDAEKSGAVWAQKQDPRVTRIGAFIRRTRIDELPQLFNVLKGDMSMIGPRPERPVFTEKFQNEIPGFTQRLGSGERRLRYDAEGKADI.

A helical transmembrane segment spans residues isoleucine 39–leucine 59.

This sequence belongs to the bacterial sugar transferase family.

It localises to the cell membrane. The catalysed reaction is di-trans,octa-cis-undecaprenyl phosphate + UDP-N-acetyl-alpha-D-galactosamine = N-acetyl-alpha-D-galactosaminyl-di-trans,octa-cis-undecaprenyl diphosphate + UMP. Its pathway is cell wall biogenesis; teichuronic acid biosynthesis. Functionally, might mediate the very first reaction in teichuronic synthesis, i.e. the formation of lipid-linked N-acetylglucosamine. This is Putative undecaprenyl-phosphate N-acetylgalactosaminyl 1-phosphate transferase (tuaA) from Bacillus subtilis (strain 168).